A 409-amino-acid polypeptide reads, in one-letter code: Nucleoprotein (409 aa).

4 disordered regions span residues 1–32, 46–69, 120–193, and 238–259; these read MASGKATGKTDAPAPVIKLGGPKPPKVGSSGN, SPPLKFEGSGVPDNENLKTSQQHG, GADT…SGAE, and VDQVFGPRTKGKEGNFGDDKMN. Residues 15-31 show a composition bias toward low complexity; sequence PVIKLGGPKPPKVGSSG. An RNA-binding region spans residues 29–160; that stretch reads SSGNASWFQA…GNFRWDFIPL (132 aa). A CoV N NTD domain is found at 31–156; the sequence is GNASWFQAIK…GGPDGNFRWD (126 aa). Residues 162 to 179 are compositionally biased toward low complexity; the sequence is RGRSGKSTAASSAASSRA. 2 stretches are compositionally biased toward basic and acidic residues: residues 180–192 and 247–259; these read PSREGSRGRRSGA and KGKEGNFGDDKMN. Residue serine 190 is modified to Phosphoserine; by host. The CoV N CTD domain maps to 215 to 331; that stretch reads TKAKADEMAH…QCVDGVGTRP (117 aa). The tract at residues 226 to 333 is dimerization; that stretch reads RYCKRTIPPG…VDGVGTRPKD (108 aa). An intrachain disulfide couples cysteine 320 to cysteine 323. The disordered stretch occupies residues 327 to 409; the sequence is VGTRPKDDEP…GDSALGENEL (83 aa). Over residues 341–354 the composition is skewed to low complexity; the sequence is RSSSRPATRTSSPA. Over residues 358 to 367 the composition is skewed to basic residues; the sequence is PRPKKEKKTK. Residues 368–384 show a composition bias toward basic and acidic residues; it reads KQDDEVDKALTSDEERN. At threonine 378 the chain carries Phosphothreonine; by host. Serine 379 is modified (phosphoserine; by host).

The protein belongs to the gammacoronavirus nucleocapsid protein family. Homooligomer. Both monomeric and oligomeric forms interact with RNA. Interacts with protein M. Interacts with NSP3; this interaction serves to tether the genome to the newly translated replicase-transcriptase complex at a very early stage of infection. In terms of processing, ADP-ribosylated. The ADP-ribosylation is retained in the virion during infection. Post-translationally, phosphorylated on serine and threonine residues.

The protein localises to the virion. It is found in the host endoplasmic reticulum-Golgi intermediate compartment. Its subcellular location is the host Golgi apparatus. Functionally, packages the positive strand viral genome RNA into a helical ribonucleocapsid (RNP) and plays a fundamental role during virion assembly through its interactions with the viral genome and membrane protein M. Plays an important role in enhancing the efficiency of subgenomic viral RNA transcription as well as viral replication. The protein is Nucleoprotein of Gallus gallus (Chicken).